Consider the following 629-residue polypeptide: tRNA uridine 5-carboxymethylaminomethyl modification enzyme MnmG (629 aa).

FAD-binding positions include 13–18 (GGGHAG), Val-125, and Ser-180. Residue 273-287 (GPRYCPSIEDKVMRF) coordinates NAD(+). Gln-370 contributes to the FAD binding site.

Belongs to the MnmG family. In terms of assembly, homodimer. Heterotetramer of two MnmE and two MnmG subunits. FAD serves as cofactor.

Its subcellular location is the cytoplasm. NAD-binding protein involved in the addition of a carboxymethylaminomethyl (cmnm) group at the wobble position (U34) of certain tRNAs, forming tRNA-cmnm(5)s(2)U34. This Salmonella paratyphi A (strain ATCC 9150 / SARB42) protein is tRNA uridine 5-carboxymethylaminomethyl modification enzyme MnmG.